The sequence spans 404 residues: Cysteine desulfurase IscS (404 aa).

Pyridoxal 5'-phosphate-binding positions include 75-76 (AT), Asn155, Gln183, and 203-205 (SGH). Lys206 carries the N6-(pyridoxal phosphate)lysine modification. Thr243 lines the pyridoxal 5'-phosphate pocket. Cys328 (cysteine persulfide intermediate) is an active-site residue. Residue Cys328 participates in [2Fe-2S] cluster binding.

This sequence belongs to the class-V pyridoxal-phosphate-dependent aminotransferase family. NifS/IscS subfamily. As to quaternary structure, homodimer. Forms a heterotetramer with IscU, interacts with other sulfur acceptors. It depends on pyridoxal 5'-phosphate as a cofactor.

The protein resides in the cytoplasm. The enzyme catalyses (sulfur carrier)-H + L-cysteine = (sulfur carrier)-SH + L-alanine. It participates in cofactor biosynthesis; iron-sulfur cluster biosynthesis. In terms of biological role, master enzyme that delivers sulfur to a number of partners involved in Fe-S cluster assembly, tRNA modification or cofactor biosynthesis. Catalyzes the removal of elemental sulfur and selenium atoms from cysteine and selenocysteine to produce alanine. Functions as a sulfur delivery protein for Fe-S cluster synthesis onto IscU, an Fe-S scaffold assembly protein, as well as other S acceptor proteins. Also functions as a selenium delivery protein in the pathway for the biosynthesis of selenophosphate. The chain is Cysteine desulfurase IscS from Salmonella typhi.